The sequence spans 546 residues: 5'-nucleotidase domain-containing protein 3 (546 aa).

Catalysis depends on Asp100, which acts as the Nucleophile. Residues Asp100 and Asp102 each contribute to the Mg(2+) site. Asp102 serves as the catalytic Proton donor. Residue 249–257 participates in substrate binding; sequence KDSIRDVHI. Position 387 (Asp387) interacts with Mg(2+).

This sequence belongs to the 5'(3')-deoxyribonucleotidase family. It depends on Mg(2+) as a cofactor.

This chain is 5'-nucleotidase domain-containing protein 3 (Nt5dc3), found in Mus musculus (Mouse).